Reading from the N-terminus, the 360-residue chain is Phospho-N-acetylmuramoyl-pentapeptide-transferase (360 aa).

The next 10 helical transmembrane spans lie at 26 to 46 (AILG…KLIE), 74 to 94 (MGGL…GDLG), 97 to 117 (YVWV…IDDY), 134 to 154 (YILQ…TAAN), 168 to 188 (VMPQ…VGSS), 199 to 219 (GLAI…AYLS), 236 to 256 (SGEL…FLWF), 263 to 283 (VFMG…IAVL), 288 to 308 (ILLV…ILQV), and 338 to 358 (VIVR…ATLK).

This sequence belongs to the glycosyltransferase 4 family. MraY subfamily. Mg(2+) is required as a cofactor.

The protein localises to the cell inner membrane. It carries out the reaction UDP-N-acetyl-alpha-D-muramoyl-L-alanyl-gamma-D-glutamyl-meso-2,6-diaminopimeloyl-D-alanyl-D-alanine + di-trans,octa-cis-undecaprenyl phosphate = di-trans,octa-cis-undecaprenyl diphospho-N-acetyl-alpha-D-muramoyl-L-alanyl-D-glutamyl-meso-2,6-diaminopimeloyl-D-alanyl-D-alanine + UMP. It participates in cell wall biogenesis; peptidoglycan biosynthesis. In terms of biological role, catalyzes the initial step of the lipid cycle reactions in the biosynthesis of the cell wall peptidoglycan: transfers peptidoglycan precursor phospho-MurNAc-pentapeptide from UDP-MurNAc-pentapeptide onto the lipid carrier undecaprenyl phosphate, yielding undecaprenyl-pyrophosphoryl-MurNAc-pentapeptide, known as lipid I. The chain is Phospho-N-acetylmuramoyl-pentapeptide-transferase from Shewanella oneidensis (strain ATCC 700550 / JCM 31522 / CIP 106686 / LMG 19005 / NCIMB 14063 / MR-1).